Consider the following 224-residue polypeptide: 7-cyano-7-deazaguanine synthase (224 aa).

Residue 8–18 (LSGGMDSAAVI) participates in ATP binding. Residues Cys-186, Cys-196, Cys-199, and Cys-202 each contribute to the Zn(2+) site.

It belongs to the QueC family. It depends on Zn(2+) as a cofactor.

The enzyme catalyses 7-carboxy-7-deazaguanine + NH4(+) + ATP = 7-cyano-7-deazaguanine + ADP + phosphate + H2O + H(+). It functions in the pathway purine metabolism; 7-cyano-7-deazaguanine biosynthesis. In terms of biological role, catalyzes the ATP-dependent conversion of 7-carboxy-7-deazaguanine (CDG) to 7-cyano-7-deazaguanine (preQ(0)). This Xanthomonas euvesicatoria pv. vesicatoria (strain 85-10) (Xanthomonas campestris pv. vesicatoria) protein is 7-cyano-7-deazaguanine synthase.